The chain runs to 294 residues: ATP synthase gamma chain (294 aa).

The protein belongs to the ATPase gamma chain family. In terms of assembly, F-type ATPases have 2 components, CF(1) - the catalytic core - and CF(0) - the membrane proton channel. CF(1) has five subunits: alpha(3), beta(3), gamma(1), delta(1), epsilon(1). CF(0) has three main subunits: a, b and c.

The protein resides in the cell inner membrane. Its function is as follows. Produces ATP from ADP in the presence of a proton gradient across the membrane. The gamma chain is believed to be important in regulating ATPase activity and the flow of protons through the CF(0) complex. The polypeptide is ATP synthase gamma chain (Campylobacter jejuni subsp. doylei (strain ATCC BAA-1458 / RM4099 / 269.97)).